Reading from the N-terminus, the 537-residue chain is Phenylalanine--tRNA ligase beta subunit (537 aa).

The B5 domain maps to 268–343 (FNFRPYRLNL…KSYGIENVRE (76 aa)). Residues Asp321, Asp327, Glu330, and Asp331 each contribute to the Mg(2+) site.

It belongs to the phenylalanyl-tRNA synthetase beta subunit family. Type 2 subfamily. Tetramer of two alpha and two beta subunits. The cofactor is Mg(2+).

The protein resides in the cytoplasm. It catalyses the reaction tRNA(Phe) + L-phenylalanine + ATP = L-phenylalanyl-tRNA(Phe) + AMP + diphosphate + H(+). The protein is Phenylalanine--tRNA ligase beta subunit of Thermoplasma volcanium (strain ATCC 51530 / DSM 4299 / JCM 9571 / NBRC 15438 / GSS1).